The sequence spans 192 residues: uncharacterized protein (192 aa).

A Nudix hydrolase domain is found at 29–160; sequence HRQAAVLIPI…PLDIYRRGDS (132 aa). The short motif at 67–89 is the Nudix box element; sequence GAVDDTDTSVIAAALREAEEEVA. Residues Glu83 and Glu87 each contribute to the Mg(2+) site.

The protein belongs to the Nudix hydrolase family. PCD1 subfamily. The cofactor is Mn(2+). It depends on Mg(2+) as a cofactor.

Probably mediates the hydrolysis of some nucleoside diphosphate derivatives. This is an uncharacterized protein from Escherichia fergusonii (strain ATCC 35469 / DSM 13698 / CCUG 18766 / IAM 14443 / JCM 21226 / LMG 7866 / NBRC 102419 / NCTC 12128 / CDC 0568-73).